We begin with the raw amino-acid sequence, 109 residues long: Nucleoid-associated protein VIBHAR_03086 (109 aa).

Disordered stretches follow at residues 1 to 21 (MFGK…QDRM) and 88 to 109 (QKEK…KMPF).

Belongs to the YbaB/EbfC family. As to quaternary structure, homodimer.

It is found in the cytoplasm. Its subcellular location is the nucleoid. In terms of biological role, binds to DNA and alters its conformation. May be involved in regulation of gene expression, nucleoid organization and DNA protection. The chain is Nucleoid-associated protein VIBHAR_03086 from Vibrio campbellii (strain ATCC BAA-1116).